The primary structure comprises 145 residues: D-aminoacyl-tRNA deacylase (145 aa).

The Gly-cisPro motif, important for rejection of L-amino acids signature appears at 137–138; that stretch reads GP.

Belongs to the DTD family. Homodimer.

The protein resides in the cytoplasm. The enzyme catalyses glycyl-tRNA(Ala) + H2O = tRNA(Ala) + glycine + H(+). The catalysed reaction is a D-aminoacyl-tRNA + H2O = a tRNA + a D-alpha-amino acid + H(+). Its function is as follows. An aminoacyl-tRNA editing enzyme that deacylates mischarged D-aminoacyl-tRNAs. Also deacylates mischarged glycyl-tRNA(Ala), protecting cells against glycine mischarging by AlaRS. Acts via tRNA-based rather than protein-based catalysis; rejects L-amino acids rather than detecting D-amino acids in the active site. By recycling D-aminoacyl-tRNA to D-amino acids and free tRNA molecules, this enzyme counteracts the toxicity associated with the formation of D-aminoacyl-tRNA entities in vivo and helps enforce protein L-homochirality. The protein is D-aminoacyl-tRNA deacylase of Limosilactobacillus reuteri (strain DSM 20016) (Lactobacillus reuteri).